We begin with the raw amino-acid sequence, 111 residues long: Universal stress protein B (111 aa).

Transmembrane regions (helical) follow at residues 1-21 and 90-110; these read MISTVALFWALFLVCVINMAR and FILTSALCGLVIISLIGLMIW.

It belongs to the universal stress protein B family.

The protein localises to the cell inner membrane. The sequence is that of Universal stress protein B from Cronobacter sakazakii (strain ATCC BAA-894) (Enterobacter sakazakii).